Consider the following 201-residue polypeptide: Recombination protein RecR (201 aa).

The segment at 57 to 72 (CADCRTFTEQEVCNIC) adopts a C4-type zinc-finger fold. Residues 81–176 (GQICVVESPA…DASRIAHGVP (96 aa)) enclose the Toprim domain.

This sequence belongs to the RecR family.

Functionally, may play a role in DNA repair. It seems to be involved in an RecBC-independent recombinational process of DNA repair. It may act with RecF and RecO. This is Recombination protein RecR from Klebsiella pneumoniae subsp. pneumoniae (strain ATCC 700721 / MGH 78578).